The following is a 238-amino-acid chain: ATP synthase subunit a (238 aa).

Helical transmembrane passes span 18 to 38, 76 to 96, 117 to 137, 195 to 215, and 216 to 236; these read MSTV…TFIG, FIVL…LGLP, VLTL…GIKI, LIGM…GLFI, and GAIQ…HKVE.

This sequence belongs to the ATPase A chain family. In terms of assembly, F-type ATPases have 2 components, CF(1) - the catalytic core - and CF(0) - the membrane proton channel. CF(1) has five subunits: alpha(3), beta(3), gamma(1), delta(1), epsilon(1). CF(0) has three main subunits: a(1), b(2) and c(9-12). The alpha and beta chains form an alternating ring which encloses part of the gamma chain. CF(1) is attached to CF(0) by a central stalk formed by the gamma and epsilon chains, while a peripheral stalk is formed by the delta and b chains.

The protein localises to the cell membrane. Key component of the proton channel; it plays a direct role in the translocation of protons across the membrane. The sequence is that of ATP synthase subunit a from Alkalihalophilus pseudofirmus (strain ATCC BAA-2126 / JCM 17055 / OF4) (Bacillus pseudofirmus).